The sequence spans 314 residues: Ribosomal protein L11 methyltransferase (314 aa).

S-adenosyl-L-methionine is bound by residues threonine 163, glycine 184, aspartate 206, and asparagine 248.

This sequence belongs to the methyltransferase superfamily. PrmA family.

It is found in the cytoplasm. It catalyses the reaction L-lysyl-[protein] + 3 S-adenosyl-L-methionine = N(6),N(6),N(6)-trimethyl-L-lysyl-[protein] + 3 S-adenosyl-L-homocysteine + 3 H(+). In terms of biological role, methylates ribosomal protein L11. The polypeptide is Ribosomal protein L11 methyltransferase (Lactobacillus delbrueckii subsp. bulgaricus (strain ATCC BAA-365 / Lb-18)).